Here is a 91-residue protein sequence, read N- to C-terminus: Small ribosomal subunit protein bS6 (91 aa).

This sequence belongs to the bacterial ribosomal protein bS6 family.

Binds together with bS18 to 16S ribosomal RNA. This chain is Small ribosomal subunit protein bS6, found in Leptospira interrogans serogroup Icterohaemorrhagiae serovar copenhageni (strain Fiocruz L1-130).